Consider the following 1043-residue polypeptide: MDLSNHISLFDTKATALTSCTSIPLDGERDDSLGLAGAIYRRAQENPSAPAIEFDGETISYAQLHCRAALLAKQLTRKGVSREEAIGIMTGTGFEQIVAQAAVVYAGCTCCALDPTLPFAQLQYRLTNAGARICLVDQENSNRLKEFEVIAIRLEGITPSQVTAELAVPPRAMGTEHRTHLMHTSGSTGKPKTVQIQARALLHLSRDDRNVPIGYEDRTAQMAMVSFDISLFEIWVTLLRGATIVPVSRTLLSDVARLARTWRELRVTVMLVPASLLPMVVFAMPTVFSGMQVVYSGGEMPNLPAMKMALEQGPPNHLFNCYGPTECCIFSLVHEVTLKDTKNSVCPLTRLISDTRIEILDPSGQPVPDGDSGELFIGGDGVSPGYVNLADKTAERFVTTRQYPALPSGCNFYATGDLVRRTGTGEIYVHGRIDNQVKIRGYRVELEGVEAAIMDTGLVTTTAACKVQRGDDDLGAALVAFVIPKNPNTFTPDQLTDALKVQVAEYLVPQVEVCTEMPLNGHTKIDRERLVREFLEAATKRQLEMAGTQDASTTISRLRKIWHSVLPGCSRHIEDGDTFHALGGTSLQAAMLLIRMKREFSVELTAVMVYEQFTLAQMARYVDEGGAKYTIHAAHNRAYRQDVDIYKSLALQPLSGQPPQWDGPFEGRIFMTGATGFVGAFLLQTLLTLPEVKMVVCLVRAKNDEKARNRVMGVQTQYNLCQSSVDYSKLVAVAGDLDSPTLGLGGELFHQLGYWASCIFHSGAHVNYAQPYQSHRDANVLGTANILRFQATGRPKRLFYLSTLNIYGPTGLVDGYTRVGENDPITKFMDAVQYDNGYAQSKWVAEKMVIDAIRDNFPISIFRPGAIFCHSKTGTGNGTDFVARLMASCMRLKHYPTMPQQSKNFVPVDYLVDAILHLSRQQCSLGQAYNVVPTLHEQPENEMRDMFHMLEKACQTPMKEMPYDKWLELLKTLDDNNDPLRPLLPMLEEKVFENHCRWEMYSKMPIYGTENLTRDLRDVPGLAQFPVLDQPLLNRFLSELNLI.

The tract at residues 41 to 386 (RRAQENPSAP…IGGDGVSPGY (346 aa)) is adenylation (A) domain. A Carrier domain is found at 549–626 (QDASTTISRL…QMARYVDEGG (78 aa)). Residue Ser586 is modified to O-(pantetheine 4'-phosphoryl)serine. The tract at residues 671–914 (MTGATGFVGA…FVPVDYLVDA (244 aa)) is short-chain dehydrogenase/reductase (R) domain. One can recognise a Thioester reductase (TE) domain in the interval 672-915 (TGATGFVGAF…VPVDYLVDAI (244 aa)).

This sequence belongs to the NRP synthetase family. Pantetheine 4'-phosphate serves as cofactor.

The catalysed reaction is L-valine + ATP + NADPH + H(+) = L-valinal + AMP + diphosphate + NADP(+). It carries out the reaction L-tryptophan + ATP + NADPH + H(+) = L-tryptophanal + AMP + diphosphate + NADP(+). The protein operates within alkaloid biosynthesis. Functionally, non-canonical nonribosomal peptide synthetase; part of the gene cluster that mediates the biosynthesis of campesine G, a dimeric indole piperazine alkaloid that shows good insecticidal activity Galleria mellonella. CpsA catalyzes the first steps of the pathway by producing L-tryptophanal and L-valinal from their respective amino-acids. These products condensate spontaneously to form trypyl-valyl pyrazine also known as didehydrocampesine A. The NmrA-like family domain-containing oxidoreductase cpsB is the next enzyme in cps pathway and reduces the unstable didehydrocampesine A to campesine A. The methyltransferase cpsF and the acetyltransferase cpsE both recognize N13 of piperazine ring to carry out methylation and acetylation of campesine A to produce campesine C and B, respectively. The cytochrome P450 monooxygenase cpsD then acts as a dimerase that catalyzes oxidative heterocoupling between campesine B and C to produce heterodimers with unexpected 6/5/6/6/6/6/5/6 eight-ring scaffold called campesine D. Finally,the cytochrome P450 monooxygenase cpsC is a regioselective dehydrogenase that catalyzes dehydrogenation reaction towards C2-N1 to produce campesine G. This chain is Non-canonical nonribosomal peptide synthetase cpsA, found in Aspergillus campestris (strain IBT 28561).